Here is a 246-residue protein sequence, read N- to C-terminus: Pyridoxine 5'-phosphate synthase (246 aa).

3-amino-2-oxopropyl phosphate is bound at residue asparagine 12. Residue 14–15 (DH) coordinates 1-deoxy-D-xylulose 5-phosphate. Arginine 23 provides a ligand contact to 3-amino-2-oxopropyl phosphate. The Proton acceptor role is filled by histidine 48. The 1-deoxy-D-xylulose 5-phosphate site is built by arginine 50 and histidine 55. Catalysis depends on glutamate 75, which acts as the Proton acceptor. A 1-deoxy-D-xylulose 5-phosphate-binding site is contributed by threonine 105. The Proton donor role is filled by histidine 196. 3-amino-2-oxopropyl phosphate is bound by residues glycine 197 and 218–219 (GH).

It belongs to the PNP synthase family. Homooctamer; tetramer of dimers.

The protein localises to the cytoplasm. It catalyses the reaction 3-amino-2-oxopropyl phosphate + 1-deoxy-D-xylulose 5-phosphate = pyridoxine 5'-phosphate + phosphate + 2 H2O + H(+). Its pathway is cofactor biosynthesis; pyridoxine 5'-phosphate biosynthesis; pyridoxine 5'-phosphate from D-erythrose 4-phosphate: step 5/5. Functionally, catalyzes the complicated ring closure reaction between the two acyclic compounds 1-deoxy-D-xylulose-5-phosphate (DXP) and 3-amino-2-oxopropyl phosphate (1-amino-acetone-3-phosphate or AAP) to form pyridoxine 5'-phosphate (PNP) and inorganic phosphate. The chain is Pyridoxine 5'-phosphate synthase from Pseudomonas putida (strain W619).